Here is a 405-residue protein sequence, read N- to C-terminus: Phosphopentomutase (405 aa).

Mn(2+) is bound by residues aspartate 10, aspartate 303, histidine 308, aspartate 344, histidine 345, and histidine 356.

This sequence belongs to the phosphopentomutase family. Requires Mn(2+) as cofactor.

It is found in the cytoplasm. It catalyses the reaction 2-deoxy-alpha-D-ribose 1-phosphate = 2-deoxy-D-ribose 5-phosphate. The catalysed reaction is alpha-D-ribose 1-phosphate = D-ribose 5-phosphate. It participates in carbohydrate degradation; 2-deoxy-D-ribose 1-phosphate degradation; D-glyceraldehyde 3-phosphate and acetaldehyde from 2-deoxy-alpha-D-ribose 1-phosphate: step 1/2. In terms of biological role, isomerase that catalyzes the conversion of deoxy-ribose 1-phosphate (dRib-1-P) and ribose 1-phosphate (Rib-1-P) to deoxy-ribose 5-phosphate (dRib-5-P) and ribose 5-phosphate (Rib-5-P), respectively. This chain is Phosphopentomutase, found in Shewanella frigidimarina (strain NCIMB 400).